The following is a 371-amino-acid chain: Liposome tubulation protein MamY (371 aa).

The Cytoplasmic portion of the chain corresponds to 1-18 (MLMNFVNNVSKTINGGAR). The chain crosses the membrane as a helical span at residues 19-39 (IVYVGSFSWAVLSLLFVTAFS). Residues 40 to 51 (GWNNIFSMLPHE) lie on the Lumenal side of the membrane. A helical transmembrane segment spans residues 52-72 (IFILVLTISLPIALIVLIFML). Residues 73-371 (SQIVRTVESV…LIDGTPISDA (299 aa)) are Cytoplasmic-facing.

This sequence belongs to the magnetosome MamY family. As to quaternary structure, probably interacts with MamX and MamZ proteins.

It localises to the magnetosome membrane. In terms of biological role, may be involved in constriction of the cell inner membrane to form mature magnetosomes. Binds cardiolipin and liposomes. May function with MamX, MamZ amd Mms6 in biomineralization. The protein is Liposome tubulation protein MamY of Magnetospirillum gryphiswaldense (strain DSM 6361 / JCM 21280 / NBRC 15271 / MSR-1).